The chain runs to 247 residues: MNPLIAQGESRTTSPVVVALDFADADGALAFASRLDPAECRLKVGKELFTSSGRHLVESLAARGFQVFLDMKFHDIPNTVAQACKAAAESGVWMVNVHASGGRRMMEAAREALAGYSQRPLLIAVTVLTSMEASDLAEVGIAATPQEHVLRLATLTRDCGLDGVVCSAQEAAMLKLALGRDFKLVTPGIRLADSAGDDQRRVMTPTAALAAGSDYLVIGRPITRAADPLAALRAINQDISVFLGKQS.

Substrate is bound by residues D21, K43, 70–79 (DMKFHDIPNT), T129, R190, Q199, G219, and R220. Catalysis depends on K72, which acts as the Proton donor.

The protein belongs to the OMP decarboxylase family. Type 1 subfamily. In terms of assembly, homodimer.

It catalyses the reaction orotidine 5'-phosphate + H(+) = UMP + CO2. It functions in the pathway pyrimidine metabolism; UMP biosynthesis via de novo pathway; UMP from orotate: step 2/2. Its function is as follows. Catalyzes the decarboxylation of orotidine 5'-monophosphate (OMP) to uridine 5'-monophosphate (UMP). In Chromobacterium violaceum (strain ATCC 12472 / DSM 30191 / JCM 1249 / CCUG 213 / NBRC 12614 / NCIMB 9131 / NCTC 9757 / MK), this protein is Orotidine 5'-phosphate decarboxylase.